Reading from the N-terminus, the 858-residue chain is Translation initiation factor IF-2 (858 aa).

The interval 59-147 (KEHAEKRRER…GKKLEGQERK (89 aa)) is disordered. The tr-type G domain occupies 361–530 (PRPPVVVVMG…LLVADLLELK (170 aa)). The G1 stretch occupies residues 370 to 377 (GHVDHGKT). A GTP-binding site is contributed by 370-377 (GHVDHGKT). The tract at residues 395-399 (GITQH) is G2. The tract at residues 416-419 (DTPG) is G3. Residues 416-420 (DTPGH) and 470-473 (NKID) contribute to the GTP site. The interval 470–473 (NKID) is G4. The segment at 506-508 (SAK) is G5.

This sequence belongs to the TRAFAC class translation factor GTPase superfamily. Classic translation factor GTPase family. IF-2 subfamily.

It is found in the cytoplasm. In terms of biological role, one of the essential components for the initiation of protein synthesis. Protects formylmethionyl-tRNA from spontaneous hydrolysis and promotes its binding to the 30S ribosomal subunits. Also involved in the hydrolysis of GTP during the formation of the 70S ribosomal complex. The chain is Translation initiation factor IF-2 from Caldicellulosiruptor saccharolyticus (strain ATCC 43494 / DSM 8903 / Tp8T 6331).